A 105-amino-acid chain; its full sequence is Flagellar transcriptional regulator FlhD (105 aa).

Belongs to the FlhD family. Homodimer; disulfide-linked. Forms a heterohexamer composed of two FlhC and four FlhD subunits. Each FlhC binds a FlhD dimer, forming a heterotrimer, and a hexamer assembles by dimerization of two heterotrimers.

The protein localises to the cytoplasm. Functionally, functions in complex with FlhC as a master transcriptional regulator that regulates transcription of several flagellar and non-flagellar operons by binding to their promoter region. Activates expression of class 2 flagellar genes, including fliA, which is a flagellum-specific sigma factor that turns on the class 3 genes. Also regulates genes whose products function in a variety of physiological pathways. The sequence is that of Flagellar transcriptional regulator FlhD from Cupriavidus necator (strain ATCC 17699 / DSM 428 / KCTC 22496 / NCIMB 10442 / H16 / Stanier 337) (Ralstonia eutropha).